Consider the following 355-residue polypeptide: Green-sensitive opsin (355 aa).

Over 1–36 the chain is Extracellular; the sequence is MNGTEGINFYVPMSNKTGVVRSPFEYPQYYLAEPWK. Residues N2 and N15 are each glycosylated (N-linked (GlcNAc...) asparagine). A helical transmembrane segment spans residues 37–61; it reads YRLVCCYIFFLISTGLPINLLTLLV. Residues 62–73 lie on the Cytoplasmic side of the membrane; that stretch reads TFKHKKLRQPLN. The helical transmembrane segment at 74–99 threads the bilayer; sequence YILVNLAVADLFMACFGFTVTFYTAW. The Extracellular portion of the chain corresponds to 100–113; sequence NGYFVFGPVGCAVE. A disulfide bond links C110 and C187. The helical transmembrane segment at 114–133 threads the bilayer; it reads GFFATLGGQVALWSLVVLAI. Residues 134-152 lie on the Cytoplasmic side of the membrane; that stretch reads ERYIVVCKPMGNFRFSATH. A helical membrane pass occupies residues 153–176; sequence AMMGIAFTWVMAFSCAAPPLFGWS. The Extracellular portion of the chain corresponds to 177–202; the sequence is RYMPEGMQCSCGPDYYTHNPDYHNES. Residues 203–230 form a helical membrane-spanning segment; the sequence is YVLYMFVIHFIIPVVVIFFSYGRLICKV. Topologically, residues 231 to 252 are cytoplasmic; the sequence is REAAAQQQESATTQKAEKEVTR. Residues 253–276 form a helical membrane-spanning segment; it reads MVILMVLGFMLAWTPYAVVAFWIF. At 277–284 the chain is on the extracellular side; sequence TNKGADFT. Residues 285-309 traverse the membrane as a helical segment; it reads ATLMAVPAFFSKSSSLYNPIIYVLM. K296 is modified (N6-(retinylidene)lysine). At 310–355 the chain is on the cytoplasmic side; sequence NKQFRNCMITTICCGKNPFGDEDVSSTVSQSKTEVSSVSSSQVSPA.

The protein belongs to the G-protein coupled receptor 1 family. Opsin subfamily. Post-translationally, phosphorylated on some or all of the serine and threonine residues present in the C-terminal region. In terms of tissue distribution, the color pigments are found in the cone photoreceptor cells.

The protein localises to the membrane. Functionally, visual pigments are the light-absorbing molecules that mediate vision. They consist of an apoprotein, opsin, covalently linked to cis-retinal. The protein is Green-sensitive opsin (PRA1) of Gallus gallus (Chicken).